A 279-amino-acid polypeptide reads, in one-letter code: tRNA dimethylallyltransferase (279 aa).

ATP is bound at residue 10-17; the sequence is GPTASGKS. Position 12–17 (12–17) interacts with substrate; it reads TASGKS.

This sequence belongs to the IPP transferase family. As to quaternary structure, monomer. Mg(2+) is required as a cofactor.

It carries out the reaction adenosine(37) in tRNA + dimethylallyl diphosphate = N(6)-dimethylallyladenosine(37) in tRNA + diphosphate. In terms of biological role, catalyzes the transfer of a dimethylallyl group onto the adenine at position 37 in tRNAs that read codons beginning with uridine, leading to the formation of N6-(dimethylallyl)adenosine (i(6)A). The sequence is that of tRNA dimethylallyltransferase from Roseobacter denitrificans (strain ATCC 33942 / OCh 114) (Erythrobacter sp. (strain OCh 114)).